We begin with the raw amino-acid sequence, 414 residues long: 2,3-diketo-5-methylthiopentyl-1-phosphate enolase (414 aa).

K99 acts as the Proton acceptor in catalysis. Substrate is bound by residues K148, 174–177 (KDDE), H265, G338, and 360–361 (GG). Mg(2+) contacts are provided by K174, D176, and E177. The residue at position 174 (K174) is an N6-carboxylysine.

It belongs to the RuBisCO large chain family. Type IV subfamily. In terms of assembly, homodimer. The cofactor is Mg(2+).

The enzyme catalyses 5-methylsulfanyl-2,3-dioxopentyl phosphate = 2-hydroxy-5-methylsulfanyl-3-oxopent-1-enyl phosphate. It participates in amino-acid biosynthesis; L-methionine biosynthesis via salvage pathway; L-methionine from S-methyl-5-thio-alpha-D-ribose 1-phosphate: step 3/6. In terms of biological role, catalyzes the enolization of 2,3-diketo-5-methylthiopentyl-1-phosphate (DK-MTP-1-P) into 2-hydroxy-3-keto-5-methylthiopentenyl-1-phosphate (HK-MTPenyl-1-P). This is 2,3-diketo-5-methylthiopentyl-1-phosphate enolase from Bacillus cereus (strain ATCC 10987 / NRS 248).